The primary structure comprises 273 residues: Ribosomal RNA small subunit methyltransferase A (273 aa).

N18, L20, G45, E66, D91, and N113 together coordinate S-adenosyl-L-methionine.

This sequence belongs to the class I-like SAM-binding methyltransferase superfamily. rRNA adenine N(6)-methyltransferase family. RsmA subfamily.

Its subcellular location is the cytoplasm. The enzyme catalyses adenosine(1518)/adenosine(1519) in 16S rRNA + 4 S-adenosyl-L-methionine = N(6)-dimethyladenosine(1518)/N(6)-dimethyladenosine(1519) in 16S rRNA + 4 S-adenosyl-L-homocysteine + 4 H(+). Specifically dimethylates two adjacent adenosines (A1518 and A1519) in the loop of a conserved hairpin near the 3'-end of 16S rRNA in the 30S particle. May play a critical role in biogenesis of 30S subunits. This chain is Ribosomal RNA small subunit methyltransferase A, found in Shigella boydii serotype 4 (strain Sb227).